The following is a 260-amino-acid chain: uncharacterized protein (260 aa).

Transmembrane regions (helical) follow at residues 39 to 59 (IFYL…LIEA), 68 to 88 (IIVG…SFLI), 111 to 131 (FLGS…FFLG), 159 to 179 (LIFS…LFKI), 193 to 213 (FIYL…ILSQ), and 214 to 234 (FILV…IKLI).

Belongs to the TatC family.

It is found in the mitochondrion membrane. This is an uncharacterized protein from Reclinomonas americana.